The following is a 282-amino-acid chain: Bifunctional protein FolD (282 aa).

Residues 165-167 (NRS), S190, and I231 each bind NADP(+).

This sequence belongs to the tetrahydrofolate dehydrogenase/cyclohydrolase family. In terms of assembly, homodimer.

It carries out the reaction (6R)-5,10-methylene-5,6,7,8-tetrahydrofolate + NADP(+) = (6R)-5,10-methenyltetrahydrofolate + NADPH. The catalysed reaction is (6R)-5,10-methenyltetrahydrofolate + H2O = (6R)-10-formyltetrahydrofolate + H(+). Its pathway is one-carbon metabolism; tetrahydrofolate interconversion. Functionally, catalyzes the oxidation of 5,10-methylenetetrahydrofolate to 5,10-methenyltetrahydrofolate and then the hydrolysis of 5,10-methenyltetrahydrofolate to 10-formyltetrahydrofolate. The protein is Bifunctional protein FolD of Clostridium botulinum (strain Kyoto / Type A2).